A 143-amino-acid chain; its full sequence is Large ribosomal subunit protein uL11 (143 aa).

It belongs to the universal ribosomal protein uL11 family. As to quaternary structure, part of the ribosomal stalk of the 50S ribosomal subunit. Interacts with L10 and the large rRNA to form the base of the stalk. L10 forms an elongated spine to which L12 dimers bind in a sequential fashion forming a multimeric L10(L12)X complex. Post-translationally, one or more lysine residues are methylated.

Functionally, forms part of the ribosomal stalk which helps the ribosome interact with GTP-bound translation factors. The chain is Large ribosomal subunit protein uL11 from Azoarcus sp. (strain BH72).